Reading from the N-terminus, the 49-residue chain is Large ribosomal subunit protein bL33 (49 aa).

The protein belongs to the bacterial ribosomal protein bL33 family.

The protein is Large ribosomal subunit protein bL33 of Syntrophus aciditrophicus (strain SB).